The chain runs to 622 residues: Phosphomethylpyrimidine synthase (622 aa).

Substrate is bound by residues Asn226, Met255, Tyr284, His320, Ser340–Gly342, Asp381–Arg384, and Glu420. His424 is a binding site for Zn(2+). Tyr447 provides a ligand contact to substrate. His488 provides a ligand contact to Zn(2+). Positions 568, 571, and 576 each coordinate [4Fe-4S] cluster.

This sequence belongs to the ThiC family. In terms of assembly, homodimer. [4Fe-4S] cluster is required as a cofactor.

It carries out the reaction 5-amino-1-(5-phospho-beta-D-ribosyl)imidazole + S-adenosyl-L-methionine = 4-amino-2-methyl-5-(phosphooxymethyl)pyrimidine + CO + 5'-deoxyadenosine + formate + L-methionine + 3 H(+). It functions in the pathway cofactor biosynthesis; thiamine diphosphate biosynthesis. In terms of biological role, catalyzes the synthesis of the hydroxymethylpyrimidine phosphate (HMP-P) moiety of thiamine from aminoimidazole ribotide (AIR) in a radical S-adenosyl-L-methionine (SAM)-dependent reaction. This Ruthia magnifica subsp. Calyptogena magnifica protein is Phosphomethylpyrimidine synthase.